The chain runs to 304 residues: Sulfate adenylyltransferase subunit 2 (304 aa).

Belongs to the PAPS reductase family. CysD subfamily. In terms of assembly, heterodimer composed of CysD, the smaller subunit, and CysNC.

It carries out the reaction sulfate + ATP + H(+) = adenosine 5'-phosphosulfate + diphosphate. The protein operates within sulfur metabolism; hydrogen sulfide biosynthesis; sulfite from sulfate: step 1/3. With CysN forms the ATP sulfurylase (ATPS) that catalyzes the adenylation of sulfate producing adenosine 5'-phosphosulfate (APS) and diphosphate, the first enzymatic step in sulfur assimilation pathway. APS synthesis involves the formation of a high-energy phosphoric-sulfuric acid anhydride bond driven by GTP hydrolysis by CysN coupled to ATP hydrolysis by CysD. The chain is Sulfate adenylyltransferase subunit 2 from Xylella fastidiosa (strain 9a5c).